A 593-amino-acid polypeptide reads, in one-letter code: SPI-1 type 3 secretion system translocon protein SctE (593 aa).

Coiled coils occupy residues 151–208 (DTAK…ATDA) and 287–314 (EGRQ…NRIM). 2 helical membrane-spanning segments follow: residues 330 to 350 (VVAA…GLAV) and 409 to 429 (IVGA…VAVV).

Belongs to the SctE/SipB/YopB family. In terms of assembly, the core secretion machinery of the T3SS is composed of approximately 20 different proteins, including cytoplasmic components, a base, an export apparatus and a needle. This subunit is involved in the formation of a pore, called the translocon, in host membrane.

It is found in the secreted. The protein resides in the host membrane. Functionally, component of the type III secretion system 1 (SPI-1 T3SS), also called injectisome, which is used to inject bacterial effector proteins into eukaryotic host cells. SipB/SctE1 and SipC/SctB are inserted into the host membrane where they form a pore and allow the translocation of effector proteins into the cytosol of target cells. In Salmonella dublin, this protein is SPI-1 type 3 secretion system translocon protein SctE.